The chain runs to 205 residues: Large ribosomal subunit protein uL4 (205 aa).

The protein belongs to the universal ribosomal protein uL4 family. Part of the 50S ribosomal subunit.

In terms of biological role, one of the primary rRNA binding proteins, this protein initially binds near the 5'-end of the 23S rRNA. It is important during the early stages of 50S assembly. It makes multiple contacts with different domains of the 23S rRNA in the assembled 50S subunit and ribosome. Its function is as follows. Forms part of the polypeptide exit tunnel. The chain is Large ribosomal subunit protein uL4 from Roseobacter denitrificans (strain ATCC 33942 / OCh 114) (Erythrobacter sp. (strain OCh 114)).